The chain runs to 539 residues: CTP synthase (539 aa).

Residues 1-267 (MTKYIFVTGG…DQKVVDFLHI (267 aa)) are amidoligase domain. Residue serine 13 participates in CTP binding. Serine 13 contributes to the UTP binding site. 14–19 (SLGKGI) serves as a coordination point for ATP. Tyrosine 54 lines the L-glutamine pocket. Aspartate 71 contacts ATP. Residues aspartate 71 and glutamate 141 each coordinate Mg(2+). CTP contacts are provided by residues 148 to 150 (DME), 188 to 193 (KSKPTQ), and lysine 224. Residues 188–193 (KSKPTQ) and lysine 224 contribute to the UTP site. The Glutamine amidotransferase type-1 domain occupies 294 to 537 (KITLVGKYVE…IGAASGLQVD (244 aa)). Glycine 356 lines the L-glutamine pocket. The Nucleophile; for glutamine hydrolysis role is filled by cysteine 383. Residues 384–387 (LGMQ), glutamate 407, and arginine 465 contribute to the L-glutamine site. Catalysis depends on residues histidine 510 and glutamate 512.

This sequence belongs to the CTP synthase family. In terms of assembly, homotetramer.

It catalyses the reaction UTP + L-glutamine + ATP + H2O = CTP + L-glutamate + ADP + phosphate + 2 H(+). The catalysed reaction is L-glutamine + H2O = L-glutamate + NH4(+). The enzyme catalyses UTP + NH4(+) + ATP = CTP + ADP + phosphate + 2 H(+). Its pathway is pyrimidine metabolism; CTP biosynthesis via de novo pathway; CTP from UDP: step 2/2. Its activity is regulated as follows. Allosterically activated by GTP, when glutamine is the substrate; GTP has no effect on the reaction when ammonia is the substrate. The allosteric effector GTP functions by stabilizing the protein conformation that binds the tetrahedral intermediate(s) formed during glutamine hydrolysis. Inhibited by the product CTP, via allosteric rather than competitive inhibition. Its function is as follows. Catalyzes the ATP-dependent amination of UTP to CTP with either L-glutamine or ammonia as the source of nitrogen. Regulates intracellular CTP levels through interactions with the four ribonucleotide triphosphates. The protein is CTP synthase of Lactobacillus delbrueckii subsp. bulgaricus (strain ATCC 11842 / DSM 20081 / BCRC 10696 / JCM 1002 / NBRC 13953 / NCIMB 11778 / NCTC 12712 / WDCM 00102 / Lb 14).